We begin with the raw amino-acid sequence, 256 residues long: Hydroxyacylglutathione hydrolase (256 aa).

Residues His-57, His-59, Asp-61, His-62, His-115, Asp-134, and His-172 each contribute to the Zn(2+) site.

The protein belongs to the metallo-beta-lactamase superfamily. Glyoxalase II family. Monomer. Zn(2+) serves as cofactor.

It carries out the reaction an S-(2-hydroxyacyl)glutathione + H2O = a 2-hydroxy carboxylate + glutathione + H(+). Its pathway is secondary metabolite metabolism; methylglyoxal degradation; (R)-lactate from methylglyoxal: step 2/2. Its function is as follows. Thiolesterase that catalyzes the hydrolysis of S-D-lactoyl-glutathione to form glutathione and D-lactic acid. This Maricaulis maris (strain MCS10) (Caulobacter maris) protein is Hydroxyacylglutathione hydrolase.